A 203-amino-acid chain; its full sequence is Pacifastin-like protease inhibitor cvp4 (203 aa).

The N-terminal stretch at 1–19 (MGFLACALLVVATAHAATA) is a signal peptide. Pacifastin domains are found at residues 23–59 (PETC…CDRN), 85–121 (DEPC…CDRN), and 147–184 (DESC…CDRY). 6 disulfide bridges follow: cysteine 26–cysteine 41, cysteine 36–cysteine 56, cysteine 39–cysteine 51, cysteine 88–cysteine 103, cysteine 98–cysteine 118, and cysteine 101–cysteine 113. The segment covering 129-148 (RKYPEPEKWNSEKERKKSDE) has biased composition (basic and acidic residues). Residues 129-150 (RKYPEPEKWNSEKERKKSDESC) are disordered. 3 disulfides stabilise this stretch: cysteine 150-cysteine 165, cysteine 160-cysteine 181, and cysteine 163-cysteine 176.

Belongs to the protease inhibitor I19 family. In terms of tissue distribution, expressed by the venom gland.

The protein localises to the secreted. Inhibits trypsin activity and prophenoloxidase (PPO) activation, an enzyme essential for both clotting and insect innate immune responses. It does not inhibit activity of chymotrypsin and protease K, and has no effect on phenoloxidase (PO) activity. In Pimpla hypochondriaca (Parasitoid wasp), this protein is Pacifastin-like protease inhibitor cvp4.